The sequence spans 233 residues: Small ribosomal subunit protein uS3 (233 aa).

Positions 39 to 107 (VRQFLNKELE…PAQINIAEVR (69 aa)) constitute a KH type-2 domain.

It belongs to the universal ribosomal protein uS3 family. As to quaternary structure, part of the 30S ribosomal subunit. Forms a tight complex with proteins S10 and S14.

Functionally, binds the lower part of the 30S subunit head. Binds mRNA in the 70S ribosome, positioning it for translation. This chain is Small ribosomal subunit protein uS3, found in Edwardsiella ictaluri (strain 93-146).